Reading from the N-terminus, the 143-residue chain is 6,7-dimethyl-8-ribityllumazine synthase (143 aa).

5-amino-6-(D-ribitylamino)uracil is bound by residues W10, 44–46 (SFE), and 68–70 (CVI). 73–74 (DT) provides a ligand contact to (2S)-2-hydroxy-3-oxobutyl phosphate. The active-site Proton donor is the H76. Residue Y101 coordinates 5-amino-6-(D-ribitylamino)uracil. R115 is a binding site for (2S)-2-hydroxy-3-oxobutyl phosphate.

This sequence belongs to the DMRL synthase family.

The catalysed reaction is (2S)-2-hydroxy-3-oxobutyl phosphate + 5-amino-6-(D-ribitylamino)uracil = 6,7-dimethyl-8-(1-D-ribityl)lumazine + phosphate + 2 H2O + H(+). The protein operates within cofactor biosynthesis; riboflavin biosynthesis; riboflavin from 2-hydroxy-3-oxobutyl phosphate and 5-amino-6-(D-ribitylamino)uracil: step 1/2. In terms of biological role, catalyzes the formation of 6,7-dimethyl-8-ribityllumazine by condensation of 5-amino-6-(D-ribitylamino)uracil with 3,4-dihydroxy-2-butanone 4-phosphate. This is the penultimate step in the biosynthesis of riboflavin. In Bacteroides fragilis (strain YCH46), this protein is 6,7-dimethyl-8-ribityllumazine synthase.